A 459-amino-acid chain; its full sequence is tRNA modification GTPase MnmE (459 aa).

Residues R20, E85, and R124 each contribute to the (6S)-5-formyl-5,6,7,8-tetrahydrofolate site. A TrmE-type G domain is found at 221-380 (GLSTVIIGRP…LEEAIQSLFY (160 aa)). N231 serves as a coordination point for K(+). Residues 231–236 (NVGKSS), 250–256 (TDIPGTT), and 275–278 (DTAG) contribute to the GTP site. S235 lines the Mg(2+) pocket. Residues T250, I252, and T255 each contribute to the K(+) site. T256 is a binding site for Mg(2+). Residue K459 participates in (6S)-5-formyl-5,6,7,8-tetrahydrofolate binding.

The protein belongs to the TRAFAC class TrmE-Era-EngA-EngB-Septin-like GTPase superfamily. TrmE GTPase family. As to quaternary structure, homodimer. Heterotetramer of two MnmE and two MnmG subunits. The cofactor is K(+).

The protein resides in the cytoplasm. Its function is as follows. Exhibits a very high intrinsic GTPase hydrolysis rate. Involved in the addition of a carboxymethylaminomethyl (cmnm) group at the wobble position (U34) of certain tRNAs, forming tRNA-cmnm(5)s(2)U34. The chain is tRNA modification GTPase MnmE from Bacillus subtilis (strain 168).